Consider the following 57-residue polypeptide: Protein YnaL (57 aa).

The interval 7-57 is disordered; the sequence is LQIPVPEPIPGDPVPVPDPIPRPQPMPDPPPDEEPIKLSHRERRSARIRAC. Residues 11-35 show a composition bias toward pro residues; the sequence is VPEPIPGDPVPVPDPIPRPQPMPDP. Over residues 46 to 57 the composition is skewed to basic residues; it reads HRERRSARIRAC.

The chain is Protein YnaL from Escherichia coli (strain K12).